A 353-amino-acid chain; its full sequence is MYLIYLRLVFCCALLLGCGDNSKFDSATDLPVEQEQEQETEQEGEPEESSEQDLVEEVDWKDIPVPADAGPNMKWEFQEISDNFEYEAPADNKGSEFLEKWDDFYHNAWAGPGLTEWKRDRSYVADGELKMWATRKPGSDKINMGCITSKTRVVYPVYIEARAKVMNSTLASDVWLLSADDTQEIDILEAYGADYSESAGKDHSYFSKKVHISHHVFIRDPFQDYQPKDAGSWFEDGTVWNKEFHRFGVYWRDPWHLEYYIDGVLVRTVSGKDIIDPKHFTNTTDPGNTEIDTRTGLNKEMDIIINTEDQTWRSSPASGLQSNTYTPTDNELSNIENNTFGVDWIRIYKPVEK.

The N-terminal stretch at 1–17 (MYLIYLRLVFCCALLLG) is a signal peptide. A lipid anchor (N-palmitoyl cysteine) is attached at Cys18. Cys18 carries S-diacylglycerol cysteine lipidation. Residues 30 to 58 (LPVEQEQEQETEQEGEPEESSEQDLVEEV) are disordered. The span at 32–58 (VEQEQEQETEQEGEPEESSEQDLVEEV) shows a compositional bias: acidic residues. One can recognise a GH16 domain in the interval 58–353 (VDWKDIPVPA…WIRIYKPVEK (296 aa)). Substrate is bound by residues 105 to 107 (YHN) and Asp181. Glu184 serves as the catalytic Nucleophile. Glu189 acts as the Proton donor in catalysis. 5 residues coordinate substrate: His215, Arg219, Asp224, Gln226, and Glu308.

It belongs to the glycosyl hydrolase 16 family. Homodimer.

The protein resides in the cell outer membrane. It catalyses the reaction Hydrolysis of (1-&gt;4)-beta-D-galactosidic linkages in agarose, giving the tetramer as the predominant product.. Its function is as follows. Cleaves the beta-1,4-linkages between beta-D-galactose and alpha-L-3,6-anhydro-galactose residues in agarose. Cleaves agarose in a random manner with retention of the anomeric-bond configuration, producing beta-anomers that give rise progressively to alpha-anomers when mutarotation takes place. Also tolerant to hybrid substrates containing C6-sulfate groups at the -4, +1, and +3 positions. The protein is Beta-agarase B (agaB) of Zobellia galactanivorans (strain DSM 12802 / CCUG 47099 / CIP 106680 / NCIMB 13871 / Dsij).